A 520-amino-acid chain; its full sequence is Pleckstrin homology domain-containing family A member 8 (520 aa).

The region spanning 1-93 (MEGVLYKWTN…WLVALGSAKA (93 aa)) is the PH domain. At Thr-139 the chain carries Phosphothreonine. At Ser-145 the chain carries Phosphoserine. Thr-153 carries the post-translational modification Phosphothreonine. The segment covering 275-285 (GEESLGNHDSD) has biased composition (basic and acidic residues). The interval 275–305 (GEESLGNHDSDLAQPELHSTSSSPESHWEED) is disordered. The glycolipid transfer protein homology domain stretch occupies residues 311–520 (TFFSTMNTSF…VHGLESDEVV (210 aa)).

As to quaternary structure, homodimer. Interacts with ARF1; the interaction together with phosphatidylinositol 4-phosphate binding is required for FAPP2 GlcCer transfer ability.

It localises to the cytoplasm. Its subcellular location is the golgi apparatus. It is found in the trans-Golgi network membrane. The protein resides in the membrane. Functionally, cargo transport protein that is required for apical transport from the trans-Golgi network (TGN). Transports AQP2 from the trans-Golgi network (TGN) to sites of AQP2 phosphorylation. Mediates the non-vesicular transport of glucosylceramide (GlcCer) from the trans-Golgi network (TGN) to the plasma membrane and plays a pivotal role in the synthesis of complex glycosphingolipids. Binding of both phosphatidylinositol 4-phosphate (PIP) and ARF1 are essential for the GlcCer transfer ability. Also required for primary cilium formation, possibly by being involved in the transport of raft lipids to the apical membrane, and for membrane tubulation. This Bos taurus (Bovine) protein is Pleckstrin homology domain-containing family A member 8 (PLEKHA8).